We begin with the raw amino-acid sequence, 362 residues long: Prostaglandin F2-alpha receptor (362 aa).

Topologically, residues 1-31 (MSTNNSVQPVSPASELLSNTTCQLEEDLSIS) are extracellular. 2 N-linked (GlcNAc...) asparagine glycosylation sites follow: Asn4 and Asn19. Residues 32–54 (FSIIFMTVGILSNSLAIAILMKA) traverse the membrane as a helical segment. Topologically, residues 55–69 (YQRFRQKYKSSFLLL) are cytoplasmic. The chain crosses the membrane as a helical span at residues 70–90 (ASALVITDFFGHLINGTIAVF). Over 91 to 109 (VYASDKDWIYFDKSNILCS) the chain is Extracellular. Cys108 and Cys186 are disulfide-bonded. A helical transmembrane segment spans residues 110-131 (IFGICMVFSGLCPLFLGSLMAI). Residues 132-152 (ERCIGVTKPIFHSTKITTKHV) lie on the Cytoplasmic side of the membrane. A helical transmembrane segment spans residues 153–175 (KMMLSGVCFFAVFVALLPILGHR). Over 176-198 (DYKIQASRTWCFYKTDQIKDWED) the chain is Extracellular. A helical transmembrane segment spans residues 199-224 (RFYLLLFAFLGLLALGISFVCNAITG). Over 225–250 (ISLLKVKFRSQQHRQGRSHHFEMVIQ) the chain is Cytoplasmic. The helical transmembrane segment at 251–267 (LLGIMCVSCICWSPFLV) threads the bilayer. Residues 268–285 (TMASIGMNIQDFKDSCER) lie on the Extracellular side of the membrane. Residues 286–307 (TLFTLRMATWNQILDPWVYILL) form a helical membrane-spanning segment. Over 308 to 362 (RKAVLRNLYVCTRRCCGVHVISLHVWELSSIKNSLKVAAISDLPVTEKVTQQTST) the chain is Cytoplasmic.

The protein belongs to the G-protein coupled receptor 1 family.

It is found in the cell membrane. In terms of biological role, receptor for prostaglandin F2-alpha (PGF2-alpha). The activity of this receptor is mediated by G proteins which activate a phosphatidylinositol-calcium second messenger system. Initiates luteolysis in the corpus luteum. The protein is Prostaglandin F2-alpha receptor (PTGFR) of Ovis aries (Sheep).